Consider the following 410-residue polypeptide: Argininosuccinate synthase (410 aa).

6-14 (AYSGGLDTS) is a binding site for ATP. Tyr-84 contributes to the L-citrulline binding site. Position 114 (Gly-114) interacts with ATP. Thr-116, Asn-120, and Asp-121 together coordinate L-aspartate. Residue Asn-120 coordinates L-citrulline. L-citrulline contacts are provided by Arg-124, Ser-169, Ser-178, Glu-254, and Tyr-266.

The protein belongs to the argininosuccinate synthase family. Type 1 subfamily. As to quaternary structure, homotetramer.

It localises to the cytoplasm. It catalyses the reaction L-citrulline + L-aspartate + ATP = 2-(N(omega)-L-arginino)succinate + AMP + diphosphate + H(+). Its pathway is amino-acid biosynthesis; L-arginine biosynthesis; L-arginine from L-ornithine and carbamoyl phosphate: step 2/3. This is Argininosuccinate synthase from Pyrococcus furiosus (strain ATCC 43587 / DSM 3638 / JCM 8422 / Vc1).